The following is a 607-amino-acid chain: UvrABC system protein C (607 aa).

A GIY-YIG domain is found at 12–91 (DSPGVYLYKD…IKRYRPRYNI (80 aa)). The 36-residue stretch at 200-235 (ENLIKKLKKEMAIASDNLEFERAAKLRDQILALEKI) folds into the UVR domain.

This sequence belongs to the UvrC family. Interacts with UvrB in an incision complex.

The protein resides in the cytoplasm. Functionally, the UvrABC repair system catalyzes the recognition and processing of DNA lesions. UvrC both incises the 5' and 3' sides of the lesion. The N-terminal half is responsible for the 3' incision and the C-terminal half is responsible for the 5' incision. The sequence is that of UvrABC system protein C from Carboxydothermus hydrogenoformans (strain ATCC BAA-161 / DSM 6008 / Z-2901).